We begin with the raw amino-acid sequence, 525 residues long: CTP synthase (525 aa).

The interval 1 to 269 (MKYIIVTGGV…ADAITTHLHL (269 aa)) is amidoligase domain. Residue Ser-12 coordinates CTP. Residue Ser-12 participates in UTP binding. ATP contacts are provided by residues 13-18 (GLGKGI) and Asp-70. Positions 70 and 144 each coordinate Mg(2+). CTP-binding positions include 151-153 (DIE), 190-195 (KTKPTQ), and Lys-226. UTP-binding positions include 190–195 (KTKPTQ) and Lys-226. Residues 292 to 524 (VAIVSKYGIE…VSACRKNKKT (233 aa)) form the Glutamine amidotransferase type-1 domain. Gly-348 provides a ligand contact to L-glutamine. Catalysis depends on Cys-375, which acts as the Nucleophile; for glutamine hydrolysis. L-glutamine is bound by residues 376–379 (LGFQ), Glu-399, and Arg-454. Catalysis depends on residues His-497 and Glu-499.

Belongs to the CTP synthase family. Homotetramer.

It carries out the reaction UTP + L-glutamine + ATP + H2O = CTP + L-glutamate + ADP + phosphate + 2 H(+). The catalysed reaction is L-glutamine + H2O = L-glutamate + NH4(+). The enzyme catalyses UTP + NH4(+) + ATP = CTP + ADP + phosphate + 2 H(+). It participates in pyrimidine metabolism; CTP biosynthesis via de novo pathway; CTP from UDP: step 2/2. Its activity is regulated as follows. Allosterically activated by GTP, when glutamine is the substrate; GTP has no effect on the reaction when ammonia is the substrate. The allosteric effector GTP functions by stabilizing the protein conformation that binds the tetrahedral intermediate(s) formed during glutamine hydrolysis. Inhibited by the product CTP, via allosteric rather than competitive inhibition. In terms of biological role, catalyzes the ATP-dependent amination of UTP to CTP with either L-glutamine or ammonia as the source of nitrogen. Regulates intracellular CTP levels through interactions with the four ribonucleotide triphosphates. In Methanosphaerula palustris (strain ATCC BAA-1556 / DSM 19958 / E1-9c), this protein is CTP synthase.